The primary structure comprises 1888 residues: Eukaryotic translation initiation factor 4G (1888 aa).

Disordered regions lie at residues 1–259 (MSFN…PTTP), 391–420 (FDNK…TQPL), 449–662 (PLPS…SLQH), 726–761 (VAHS…KNSE), 838–903 (ADVS…DGEV), 961–1042 (AYKR…SGDR), 1083–1138 (TNVS…DPRL), 1331–1356 (GERE…EREE), 1462–1605 (KWQQ…PGDL), and 1639–1691 (RFAG…PSLP). Polar residues-rich tracts occupy residues 13–36 (GYTQ…SGTH) and 75–84 (VNSTDSSNAP). Basic and acidic residues predominate over residues 171–183 (DEQKRDQARHESF). Residues 185–195 (PVPPMPIPLAP) show a composition bias toward pro residues. Composition is skewed to polar residues over residues 211–231 (NVGQ…NTGD), 244–259 (ASPN…PTTP), 393–405 (NKQS…TGTS), and 458–475 (NSQP…SQNV). The span at 497–506 (PNREHTRDTH) shows a compositional bias: basic and acidic residues. The segment covering 586–596 (IKSSPVISKQF) has biased composition (polar residues). Residues 603 to 630 (VSLESQDSSSVQSSLTASSEESELAVAH) are compositionally biased toward low complexity. Positions 631-645 (SEVRRENLLGSDLHK) are enriched in basic and acidic residues. Low complexity predominate over residues 840–850 (VSASVSSSSTV). The span at 869–885 (NMSSNEVLKNVVKSDQP) shows a compositional bias: polar residues. The span at 963–983 (KRPEEKKETVAHSESIERTES) shows a compositional bias: basic and acidic residues. An EIF4E-binding region spans residues 1048–1093 (KKYSRDFLLKFAEQFLDLPHNFEVTSDIESLMSTHTNVSHHHDRDP). Positions 1109–1124 (RLDRRGSNLVDDDRWS) are enriched in basic and acidic residues. Residues 1239–1462 (QRQLKAILNK…KDAIDLRKNK (224 aa)) form the MIF4G domain. Basic and acidic residues-rich tracts occupy residues 1467 to 1484 (RKVE…DAAQ) and 1661 to 1674 (KDLR…DRSR). Residues 1700–1824 (RLQQLSLTAI…SLREVADLIC (125 aa)) enclose the MI domain.

The protein belongs to the eukaryotic initiation factor 4G family. In terms of assembly, EIF4F is a multi-subunit complex, the composition of which varies with external and internal environmental conditions. It is composed of at least EIF4A, EIF4E and EIF4G. Interacts directly with eIF4E. In higher plants two isoforms of EIF4F have been identified, named isoform EIF4F and isoform EIF(iso)4F. Isoform EIF4F has subunits p220 and p26, whereas isoform EIF(iso)4F has subunits p82 and p28.

Component of the protein complex eIF4F, which is involved in the recognition of the mRNA cap, ATP-dependent unwinding of 5'-terminal secondary structure and recruitment of mRNA to the ribosome. This Cucumis melo (Muskmelon) protein is Eukaryotic translation initiation factor 4G.